Reading from the N-terminus, the 193-residue chain is PXMP2/4 family protein 2 (193 aa).

4 helical membrane passes run 56-78 (VATM…YRSL), 96-116 (IDQL…TNFI), 132-152 (LFYA…INFS), and 160-180 (VLYS…ISFD).

Belongs to the peroxisomal membrane protein PXMP2/4 family.

Its subcellular location is the membrane. The sequence is that of PXMP2/4 family protein 2 from Dictyostelium discoideum (Social amoeba).